Consider the following 965-residue polypeptide: Aminopeptidase N (965 aa).

Topologically, residues 1–8 are cytoplasmic; that stretch reads MAKGFYIS. The helical; Signal-anchor for type II membrane protein transmembrane segment at 9-32 threads the bilayer; it reads KALGILAILLGVAAVATIIALSVV. A cytosolic Ser/Thr-rich junction region spans residues 33-65; it reads YAQEKNKNAERGTAAPTSPTGPTTTSATTLDQS. Residues 33–965 are Extracellular-facing; that stretch reads YAQEKNKNAE…VVLNWFKDHS (933 aa). The interval 40–65 is disordered; the sequence is NAERGTAAPTSPTGPTTTSATTLDQS. The span at 44–61 shows a compositional bias: low complexity; that stretch reads GTAAPTSPTGPTTTSATT. Residues 66–965 are metalloprotease; that stretch reads KPWNRYRLPT…VVLNWFKDHS (900 aa). Asn-125 carries N-linked (GlcNAc...) asparagine glycosylation. The residue at position 173 (Tyr-173) is a Sulfotyrosine. N-linked (GlcNAc...) asparagine glycosylation is found at Asn-231, Asn-260, and Asn-316. 349 to 353 provides a ligand contact to substrate; it reads GAMEN. Zn(2+) is bound at residue His-385. Catalysis depends on Glu-386, which acts as the Proton acceptor. 2 residues coordinate Zn(2+): His-389 and Glu-408. Tyr-416 carries the sulfotyrosine modification. Asn-508, Asn-569, Asn-624, Asn-680, Asn-734, and Asn-738 each carry an N-linked (GlcNAc...) asparagine glycan. 2 disulfide bridges follow: Cys-760–Cys-767 and Cys-797–Cys-833.

Belongs to the peptidase M1 family. As to quaternary structure, homodimer. Interacts with SLC6A19. Zn(2+) serves as cofactor. Post-translationally, sulfated. N- and O-glycosylated. In terms of processing, may undergo proteolysis and give rise to a soluble form.

It localises to the cell membrane. It catalyses the reaction Release of an N-terminal amino acid, Xaa-|-Yaa- from a peptide, amide or arylamide. Xaa is preferably Ala, but may be most amino acids including Pro (slow action). When a terminal hydrophobic residue is followed by a prolyl residue, the two may be released as an intact Xaa-Pro dipeptide.. Its function is as follows. Broad specificity aminopeptidase which plays a role in the final digestion of peptides generated from hydrolysis of proteins by gastric and pancreatic proteases. Also involved in the processing of various peptides including peptide hormones, such as angiotensin III and IV, neuropeptides, and chemokines. May also be involved the cleavage of peptides bound to major histocompatibility complex class II molecules of antigen presenting cells. May have a role in angiogenesis and promote cholesterol crystallization. May have a role in amino acid transport by acting as binding partner of amino acid transporter SLC6A19 and regulating its activity. The sequence is that of Aminopeptidase N (ANPEP) from Bos taurus (Bovine).